The sequence spans 147 residues: MRSLLILVLCFLPLAALGKVYGRCELAAAMKRLGLDNYRGYSLGNWVCAAKFESNFNTHATNRNTDGSTDYGILQINSRWWCNDGRTPGSKNLCNIPCSALLSSDITASVNCAKKIASGGNGMNAWVAWRNRCKGTDVHAWIRGCRL.

Residues 1–18 (MRSLLILVLCFLPLAALG) form the signal peptide. One can recognise a C-type lysozyme domain in the interval 19 to 147 (KVYGRCELAA…VHAWIRGCRL (129 aa)). 4 disulfides stabilise this stretch: Cys24/Cys145, Cys48/Cys133, Cys82/Cys98, and Cys94/Cys112.

This sequence belongs to the glycosyl hydrolase 22 family. In terms of assembly, monomer.

Its subcellular location is the secreted. It carries out the reaction Hydrolysis of (1-&gt;4)-beta-linkages between N-acetylmuramic acid and N-acetyl-D-glucosamine residues in a peptidoglycan and between N-acetyl-D-glucosamine residues in chitodextrins.. Functionally, lysozymes have primarily a bacteriolytic function; those in tissues and body fluids are associated with the monocyte-macrophage system and enhance the activity of immunoagents. This Meleagris gallopavo (Wild turkey) protein is Lysozyme C (LYZ).